A 532-amino-acid chain; its full sequence is Putative sodium-dependent excitatory amino acid transporter glt-3 (532 aa).

Over 1 to 5 the chain is Cytoplasmic; sequence MGMKK. 3 helical membrane passes run 6–26, 46–66, and 83–103; these read DLLL…GFVI, FMQI…ISAL, and IYYM…VSSI. The Extracellular portion of the chain corresponds to 104 to 181; sequence HPGDPELIHE…SEVLHKQTLT (78 aa). N-linked (GlcNAc...) asparagine glycosylation is found at asparagine 164 and asparagine 169. Transmembrane regions (helical) follow at residues 182 to 202, 222 to 242, 264 to 284, 352 to 372, and 383 to 402; these read YTNE…GIIL, IIMR…LSLV, VTVI…LYFL, AVAV…MDLV, and IGSG…LTTV.

Belongs to the dicarboxylate/amino acid:cation symporter (DAACS) (TC 2.A.23) family.

It localises to the membrane. This chain is Putative sodium-dependent excitatory amino acid transporter glt-3 (glt-3), found in Caenorhabditis elegans.